Consider the following 152-residue polypeptide: Small ribosomal subunit protein uS15 (152 aa).

The protein belongs to the universal ribosomal protein uS15 family. Part of the 30S ribosomal subunit.

This chain is Small ribosomal subunit protein uS15, found in Saccharolobus solfataricus (strain ATCC 35092 / DSM 1617 / JCM 11322 / P2) (Sulfolobus solfataricus).